Consider the following 578-residue polypeptide: Pentatricopeptide repeat-containing protein At4g22760 (578 aa).

PPR repeat units lie at residues 68–102 (DSFSWGCLVRFLSQHRKFKETVDVYIDMHNSGIPP), 103–137 (SSHAVTSVLRACGKMENMVDGKPIHAQALKNGLCG), 138–168 (CVYVQTGLVGLYSRLGYIELAKKAFDDIAEK), 169–203 (NTVSWNSLLHGYLESGELDEARRVFDKIPEKDAVS), 204–230 (WNLIISSYAKKGDMGNACSLFSAMPLK), 231–261 (SPASWNILIGGYVNCREMKLARTYFDAMPQK), 262–292 (NGVSWITMISGYTKLGDVQSAEELFRLMSKK), 293–327 (DKLVYDAMIACYTQNGKPKDALKLFAQMLERNSYI), 330–364 (DEITLSSVVSANSQLGNTSFGTWVESYITEHGIKI), 365–395 (DDLLSTSLIDLYMKGGDFAKAFKMFSNLNKK), 396–430 (DTVSYSAMIMGCGINGMATEANSLFTAMIEKKIPP), 431–465 (NVVTFTGLLSAYSHSGLVQEGYKCFNSMKDHNLEP), and 466–496 (SADHYGIMVDMLGRAGRLEEAYELIKSMPMQ). The tract at residues 501 to 576 (VWGALLLASG…TLGCSWVEGS (76 aa)) is type E motif.

This sequence belongs to the PPR family. PCMP-E subfamily.

This chain is Pentatricopeptide repeat-containing protein At4g22760 (PCMP-E6), found in Arabidopsis thaliana (Mouse-ear cress).